The chain runs to 235 residues: UPF0758 protein Swol_1642 (235 aa).

One can recognise an MPN domain in the interval 109-235 (IIKSPEDVQE…YCSLKARGLI (127 aa)). Positions 184, 186, and 197 each coordinate Zn(2+). Positions 184–197 (HNHPSGDPTPSQED) match the JAMM motif motif.

Belongs to the UPF0758 family.

The protein is UPF0758 protein Swol_1642 of Syntrophomonas wolfei subsp. wolfei (strain DSM 2245B / Goettingen).